Consider the following 361-residue polypeptide: Peptide chain release factor 1 (361 aa).

The residue at position 235 (glutamine 235) is an N5-methylglutamine.

Belongs to the prokaryotic/mitochondrial release factor family. Post-translationally, methylated by PrmC. Methylation increases the termination efficiency of RF1.

The protein localises to the cytoplasm. Its function is as follows. Peptide chain release factor 1 directs the termination of translation in response to the peptide chain termination codons UAG and UAA. The sequence is that of Peptide chain release factor 1 from Azoarcus sp. (strain BH72).